A 735-amino-acid polypeptide reads, in one-letter code: DNA replication licensing factor mcm5 (735 aa).

The MCM domain maps to 332–538; sequence IYETVAKSIA…RDMTLAKHVM (207 aa). Arginine 372 contacts ADP. The short motif at 513–516 is the Arginine finger element; that stretch reads SRFD.

It belongs to the MCM family. As to quaternary structure, component of the mcm2-7 complex (RLF-M). The complex forms a toroidal hexameric ring with the proposed subunit order mcm2-mcm6-mcm4-mcm7-mcm3-mcm5. The heterodimer of mmcm3/mcm5 interacts with mcm4, mmcm6, mcm7 and weakly with mcm2. Component of the CMG helicase complex, composed of the mcm2-7 complex, the GINS complex and cdc45.

The protein resides in the nucleus. Its subcellular location is the chromosome. It carries out the reaction ATP + H2O = ADP + phosphate + H(+). Acts as a component of the MCM2-7 complex (MCM complex) which is the replicative helicase essential for 'once per cell cycle' DNA replication initiation and elongation in eukaryotic cells. Core component of CDC45-MCM-GINS (CMG) helicase, the molecular machine that unwinds template DNA during replication, and around which the replisome is built. The active ATPase sites in the MCM2-7 ring are formed through the interaction surfaces of two neighboring subunits such that a critical structure of a conserved arginine finger motif is provided in trans relative to the ATP-binding site of the Walker A box of the adjacent subunit. The six ATPase active sites, however, are likely to contribute differentially to the complex helicase activity. The chain is DNA replication licensing factor mcm5 from Xenopus tropicalis (Western clawed frog).